Reading from the N-terminus, the 198-residue chain is Probable GTP-binding protein EngB (198 aa).

Residues 21 to 195 (NFSEVAFLGR…EDIIINQTLG (175 aa)) form the EngB-type G domain. GTP-binding positions include 29-36 (GRSNVGKS), 56-60 (GKTQL), 81-84 (DLPG), 151-154 (TKCD), and 174-176 (VSN). Serine 36 and threonine 58 together coordinate Mg(2+).

The protein belongs to the TRAFAC class TrmE-Era-EngA-EngB-Septin-like GTPase superfamily. EngB GTPase family. Requires Mg(2+) as cofactor.

Necessary for normal cell division and for the maintenance of normal septation. The chain is Probable GTP-binding protein EngB from Campylobacter jejuni subsp. jejuni serotype O:2 (strain ATCC 700819 / NCTC 11168).